The sequence spans 1333 residues: Vascular endothelial growth factor receptor 1 (1333 aa).

The signal sequence occupies residues 1 to 22; the sequence is MVSCWDTAVLPYALLGCLLLTG. Over 23-759 the chain is Extracellular; it reads YGSGSKLKVP…QGTSDKSNLE (737 aa). 7 Ig-like C2-type domains span residues 32–124, 152–215, 231–328, 334–429, 430–550, 557–656, and 662–748; these read PELS…AESS, GRQL…VNGH, LDVQ…TSVH, FISV…NVKP, QIYE…RNIK, PNGF…EVLV, and PHLL…AYLT. Cystine bridges form between C53–C108 and C159–C208. N-linked (GlcNAc...) asparagine glycans are attached at residues N101, N165, N197, and N252. A disulfide bridge connects residues C253 and C312. N324, N418, N475, N517, N598, N626, N667, and N714 each carry an N-linked (GlcNAc...) asparagine glycan. Intrachain disulfides connect C455–C536 and C578–C637. C683 and C732 form a disulfide bridge. A helical transmembrane segment spans residues 760–781; it reads LITLTCTCVAATLFWLLLTLFI. The Cytoplasmic segment spans residues 782–1333; it reads RKLKRSSSEV…SVVLYSSPPA (552 aa). The Protein kinase domain maps to 828 to 1158; that stretch reads LKLGKSLGRG…ELVEKLGDLL (331 aa). Residues 834 to 842 and K862 contribute to the ATP site; that span reads LGRGAFGKV. Residue Y915 is modified to Phosphotyrosine; by autocatalysis. The disordered stretch occupies residues 947 to 983; it reads EPGLEQGQKPRLDSVSSSSVTSSSFPEDRSVSDVEGD. Low complexity predominate over residues 960–970; the sequence is SVSSSSVTSSS. D1022 functions as the Proton acceptor in the catalytic mechanism. 6 positions are modified to phosphotyrosine; by autocatalysis: Y1053, Y1169, Y1213, Y1242, Y1322, and Y1328.

This sequence belongs to the protein kinase superfamily. Tyr protein kinase family. CSF-1/PDGF receptor subfamily. As to quaternary structure, interacts with VEGFA, VEGFB and PGF. Monomer in the absence of bound VEGFA, VEGFB or PGF. Homodimer in the presence of bound VEGFA, VEGFB and PGF. Can also form a heterodimer with KDR. Interacts (tyrosine phosphorylated) with CBL, CRK, GRB2, NCK1, PIK3R1, PLCG, PSEN1 and PTPN11. Probably interacts with PTPRB. Interacts with RACK1. Identified in a complex with CBL and CD2AP. Post-translationally, N-glycosylated. Ubiquitinated after VEGFA-mediated autophosphorylation, leading to proteolytic degradation. In terms of processing, autophosphorylated on tyrosine residues upon ligand binding. Autophosphorylation occurs in trans, i.e. one subunit of the dimeric receptor phosphorylates tyrosine residues on the other subunit. Phosphorylation at Tyr-1169 is important for interaction with PLCG. Phosphorylation at Tyr-1213 is important for interaction with PIK3R1, PTPN11, GRB2, and PLCG. Phosphorylation at Tyr-1328 is important for endocytosis and for interaction with CBL, NCK1 and CRK. Is probably dephosphorylated by PTPRB.

It is found in the cell membrane. It localises to the endosome. The catalysed reaction is L-tyrosyl-[protein] + ATP = O-phospho-L-tyrosyl-[protein] + ADP + H(+). With respect to regulation, present in an inactive conformation in the absence of bound ligand. Binding of VEGFA, VEGFB or PGF leads to dimerization and activation by autophosphorylation on tyrosine residues. Its function is as follows. Tyrosine-protein kinase that acts as a cell-surface receptor for VEGFA, VEGFB and PGF, and plays an essential role in the development of embryonic vasculature, the regulation of angiogenesis, cell survival, cell migration, macrophage function, chemotaxis, and cancer cell invasion. Acts as a positive regulator of postnatal retinal hyaloid vessel regression. May play an essential role as a negative regulator of embryonic angiogenesis by inhibiting excessive proliferation of endothelial cells. Can promote endothelial cell proliferation, survival and angiogenesis in adulthood. Its function in promoting cell proliferation seems to be cell-type specific. Promotes PGF-mediated proliferation of endothelial cells, and proliferation of some types of cancer cells, but does not promote proliferation of normal fibroblasts. Has very high affinity for VEGFA and relatively low protein kinase activity; may function as a negative regulator of VEGFA signaling by limiting the amount of free VEGFA and preventing its binding to KDR. Modulates KDR signaling by forming heterodimers with KDR. Ligand binding leads to the activation of several signaling cascades. Activation of PLCG leads to the production of the cellular signaling molecules diacylglycerol and inositol 1,4,5-trisphosphate and the activation of protein kinase C. Mediates phosphorylation of PIK3R1, the regulatory subunit of phosphatidylinositol 3-kinase, leading to the activation of phosphatidylinositol kinase and the downstream signaling pathway. Mediates activation of MAPK1/ERK2, MAPK3/ERK1 and the MAP kinase signaling pathway, as well as of the AKT1 signaling pathway. Phosphorylates SRC, YES1 and PLCG, and may also phosphorylate CBL. Promotes phosphorylation of AKT1 and PTK2/FAK1. This chain is Vascular endothelial growth factor receptor 1 (Flt1), found in Mus musculus (Mouse).